We begin with the raw amino-acid sequence, 314 residues long: Ribosomal RNA small subunit methyltransferase H (314 aa).

S-adenosyl-L-methionine contacts are provided by residues 37 to 39 (GGH), D56, F86, D108, and H115.

This sequence belongs to the methyltransferase superfamily. RsmH family.

The protein resides in the cytoplasm. It carries out the reaction cytidine(1402) in 16S rRNA + S-adenosyl-L-methionine = N(4)-methylcytidine(1402) in 16S rRNA + S-adenosyl-L-homocysteine + H(+). In terms of biological role, specifically methylates the N4 position of cytidine in position 1402 (C1402) of 16S rRNA. The chain is Ribosomal RNA small subunit methyltransferase H from Leptospira biflexa serovar Patoc (strain Patoc 1 / ATCC 23582 / Paris).